The sequence spans 229 residues: Potassium/proton antiporter CemA (229 aa).

4 consecutive transmembrane segments (helical) span residues 7-27, 114-134, 145-165, and 189-209; these read FTSLLYLASIVFLPWWISLSF, IICFVILSGYSILGNEELVIL, LSDTIKAFWILLLTDFFIGFH, and ILSSLVCIFPVILDTLFKFWV.

It belongs to the CemA family.

The protein localises to the plastid. The protein resides in the chloroplast inner membrane. It catalyses the reaction K(+)(in) + H(+)(out) = K(+)(out) + H(+)(in). Its function is as follows. Contributes to K(+)/H(+) antiport activity by supporting proton efflux to control proton extrusion and homeostasis in chloroplasts in a light-dependent manner to modulate photosynthesis. Prevents excessive induction of non-photochemical quenching (NPQ) under continuous-light conditions. Indirectly promotes efficient inorganic carbon uptake into chloroplasts. The protein is Potassium/proton antiporter CemA of Daucus carota (Wild carrot).